We begin with the raw amino-acid sequence, 295 residues long: uncharacterized protein (295 aa).

In terms of domain architecture, Sigma-54 factor interaction spans 4–233 (IVVKSMAMEK…LQNTIERLVL (230 aa)).

This is an uncharacterized protein from Pseudomonas sp. (strain NS671).